The chain runs to 329 residues: Mitochondrial substrate carrier family protein W (329 aa).

Topologically, residues 1–39 are mitochondrial intermembrane; sequence MTTNNSNDNNKRYGIIKQQLQQQQQQHHQQHEQHSRLVE. Solcar repeat units follow at residues 34-119, 133-221, and 231-321; these read HSRL…CKEL, ESPL…FKSI, and LGIV…IKKF. Residues 40–60 form a helical membrane-spanning segment; that stretch reads MTAGCGAGFMASLFTTPLDVI. Residues 61–90 lie on the Mitochondrial matrix side of the membrane; sequence KTTLQVDNSSNKTIMSTVKSILDRKGGVKN. A helical membrane pass occupies residues 91-111; it reads LYLGLKPTLVGQIPSWAVYFS. Residues 112-135 are Mitochondrial intermembrane-facing; it reads TYTFCKELFTKENDKHSLLEKESP. Residues 136 to 156 form a helical membrane-spanning segment; sequence LIFMTSAIIAGAATSICTSPI. The Mitochondrial matrix segment spans residues 157 to 193; sequence WLIKTRFITQEMVGRQKKYRGIVHSMVSIYHEEGFRG. The helical transmembrane segment at 194–214 threads the bilayer; it reads LYKGLGPSLLGVLHVGVQFPL. At 215–230 the chain is on the mitochondrial intermembrane side; the sequence is YEKFKSILKEKNKNKE. A helical transmembrane segment spans residues 231–251; it reads LGIVEIMIASSVSKIIASVVA. Residues 252–296 lie on the Mitochondrial matrix side of the membrane; the sequence is YPHEVLRARSQDSSPDSPNRTYRGNIIQMFKQIVREEGWRGLYRG. The chain crosses the membrane as a helical span at residues 297–315; it reads MGVNLLRVTPSCVITFTSY. The Mitochondrial intermembrane segment spans residues 316–329; sequence EYIKKFLSQNQNHF.

This sequence belongs to the mitochondrial carrier (TC 2.A.29) family.

The protein localises to the mitochondrion inner membrane. Functionally, mitochondrial solute carriers shuttle metabolites, nucleotides, and cofactors through the mitochondrial inner membrane. This Dictyostelium discoideum (Social amoeba) protein is Mitochondrial substrate carrier family protein W (mcfW).